Reading from the N-terminus, the 622-residue chain is MNFNKEKYPTLALAETPESLRLLPKESLPELCSELRSYLLDAVSQSSGHFASGLGVIELTLALHYVYKTPFDHLIWDVGHQAYPHKILTGRRDQIDRIRQKNGLHPFPSREESDYDVLSVGHSSTSISAGLGLAVAAEREGLGRKIICVIGDGAITAGMAFEAMNHAGELHSDMLVILNDNDMSISENVGGLNNRFAQLLSGSFYTRLREKGKKAFSAAPPIKALLKRTEEHLKGMVVPSTLFEELGFNYIGPIDGHHIYTLVHMLENMRHLKGPQLLHVVTKKGKGYTPAEKDPIAWHAVPRFDPLSGTLPKTVDSIPTYSNIFGDWLCDTAATDPRLMAITPAMREGSGMVRFSREYPKQYFDVAIAEQHAVTFAAGLAIGGYKPVVAIYSTFLQRAYDQLIHDVAIQNLPVLFAIDRAGLVGADGQTHQGAFDLSFMRCIPNMVIMAPSDENECRQMLHTGYLHPGPAAVRYPRGQGTGVALQPLFPLTIGKSEIKIQGEKIALLCFGTLLSVAREVAIHLNATLVDMRFIKPLDTELILAMASNHSLLVTIEENVIKGGAGSAVNECLMSHKKTVMLLNIGLPDQFIPQGEQNEMRAAYGLDSRGIQKQIQAYCESEM.

Thiamine diphosphate-binding positions include His80 and 121–123 (GHS). Asp152 is a binding site for Mg(2+). Thiamine diphosphate contacts are provided by residues 153 to 154 (GA), Asn181, Tyr288, and Glu370. Residue Asn181 participates in Mg(2+) binding.

Belongs to the transketolase family. DXPS subfamily. As to quaternary structure, homodimer. Mg(2+) is required as a cofactor. Thiamine diphosphate serves as cofactor.

It catalyses the reaction D-glyceraldehyde 3-phosphate + pyruvate + H(+) = 1-deoxy-D-xylulose 5-phosphate + CO2. The protein operates within metabolic intermediate biosynthesis; 1-deoxy-D-xylulose 5-phosphate biosynthesis; 1-deoxy-D-xylulose 5-phosphate from D-glyceraldehyde 3-phosphate and pyruvate: step 1/1. Functionally, catalyzes the acyloin condensation reaction between C atoms 2 and 3 of pyruvate and glyceraldehyde 3-phosphate to yield 1-deoxy-D-xylulose-5-phosphate (DXP). This is 1-deoxy-D-xylulose-5-phosphate synthase from Hamiltonella defensa subsp. Acyrthosiphon pisum (strain 5AT).